A 365-amino-acid polypeptide reads, in one-letter code: tRNA(Met) cytidine acetate ligase (365 aa).

ATP contacts are provided by residues 7–20 (IAEF…HKYL), G96, N152, and R175.

Belongs to the TmcAL family.

The protein resides in the cytoplasm. The enzyme catalyses cytidine(34) in elongator tRNA(Met) + acetate + ATP = N(4)-acetylcytidine(34) in elongator tRNA(Met) + AMP + diphosphate. In terms of biological role, catalyzes the formation of N(4)-acetylcytidine (ac(4)C) at the wobble position of elongator tRNA(Met), using acetate and ATP as substrates. First activates an acetate ion to form acetyladenylate (Ac-AMP) and then transfers the acetyl group to tRNA to form ac(4)C34. The sequence is that of tRNA(Met) cytidine acetate ligase from Streptococcus pneumoniae (strain ATCC BAA-255 / R6).